The sequence spans 50 residues: Protein PsbN (50 aa).

Residues 14 to 34 (IAVTILALLLALTGFGLWTAF) form a helical membrane-spanning segment.

This sequence belongs to the PsbN family.

It is found in the cellular thylakoid membrane. Functionally, may play a role in photosystem I and II biogenesis. The protein is Protein PsbN of Prochlorococcus marinus (strain MIT 9301).